The primary structure comprises 142 residues: Ribosomal RNA large subunit methyltransferase H (142 aa).

Leu55 and Gly87 together coordinate S-adenosyl-L-methionine.

This sequence belongs to the RNA methyltransferase RlmH family. As to quaternary structure, homodimer.

Its subcellular location is the cytoplasm. The catalysed reaction is pseudouridine(1915) in 23S rRNA + S-adenosyl-L-methionine = N(3)-methylpseudouridine(1915) in 23S rRNA + S-adenosyl-L-homocysteine + H(+). In terms of biological role, specifically methylates the pseudouridine at position 1915 (m3Psi1915) in 23S rRNA. The chain is Ribosomal RNA large subunit methyltransferase H from Sphingopyxis alaskensis (strain DSM 13593 / LMG 18877 / RB2256) (Sphingomonas alaskensis).